The sequence spans 111 residues: Universal stress protein B (111 aa).

The next 2 helical transmembrane spans lie at 1–21 and 90–110; these read MIST…NMAR and FLLT…LMIW.

This sequence belongs to the universal stress protein B family.

Its subcellular location is the cell inner membrane. This is Universal stress protein B from Salmonella arizonae (strain ATCC BAA-731 / CDC346-86 / RSK2980).